The sequence spans 208 residues: N-hydroxyputrescine acetyltransferase (208 aa).

This sequence belongs to the IucB family.

The enzyme catalyses N-hydroxyputrescine + acetyl-CoA = N(1)-acetyl-N(1)-hydroxyputrescine + CoA. The protein operates within siderophore biosynthesis. In terms of biological role, N-acetyltransferase involved in the biosynthesis of fimsbactin A, the major siderophore produced by A.baumannii. Catalyzes the acetylation of N-hydroxyputrescine to form N(1)-acetyl-N(1)-hydroxyputrescine (ahPutr). This is N-hydroxyputrescine acetyltransferase from Acinetobacter baumannii (strain ATCC 17978 / DSM 105126 / CIP 53.77 / LMG 1025 / NCDC KC755 / 5377).